Here is a 520-residue protein sequence, read N- to C-terminus: GMP synthase [glutamine-hydrolyzing] (520 aa).

Residues 9 to 202 enclose the Glutamine amidotransferase type-1 domain; sequence TVLIVDFGSQ…IHNIAGIKGD (194 aa). Cysteine 86 functions as the Nucleophile in the catalytic mechanism. Catalysis depends on residues histidine 176 and glutamate 178. The GMPS ATP-PPase domain maps to 203–395; sequence WSMSAYRAKA…LGLPDSFIGR (193 aa). Position 230–236 (230–236) interacts with ATP; that stretch reads SGGVDSS.

As to quaternary structure, homodimer.

The enzyme catalyses XMP + L-glutamine + ATP + H2O = GMP + L-glutamate + AMP + diphosphate + 2 H(+). The protein operates within purine metabolism; GMP biosynthesis; GMP from XMP (L-Gln route): step 1/1. Its function is as follows. Catalyzes the synthesis of GMP from XMP. In Rhizobium rhizogenes (strain K84 / ATCC BAA-868) (Agrobacterium radiobacter), this protein is GMP synthase [glutamine-hydrolyzing].